The sequence spans 363 residues: Dihydroorotate dehydrogenase (quinone) (363 aa).

Residues 67 to 71 and T91 each bind FMN; that span reads AGLDK. Residue K71 coordinates substrate. A substrate-binding site is contributed by 116-120; the sequence is NRMGF. N145 and N178 together coordinate FMN. Position 178 (N178) interacts with substrate. S181 functions as the Nucleophile in the catalytic mechanism. N183 is a binding site for substrate. FMN-binding residues include K219 and T247. 248 to 249 is a binding site for substrate; it reads NT. FMN contacts are provided by residues G268, G297, and 318-319; that span reads YT.

Belongs to the dihydroorotate dehydrogenase family. Type 2 subfamily. Monomer. The cofactor is FMN.

The protein resides in the cell membrane. The catalysed reaction is (S)-dihydroorotate + a quinone = orotate + a quinol. It participates in pyrimidine metabolism; UMP biosynthesis via de novo pathway; orotate from (S)-dihydroorotate (quinone route): step 1/1. Functionally, catalyzes the conversion of dihydroorotate to orotate with quinone as electron acceptor. In Myxococcus xanthus (strain DK1622), this protein is Dihydroorotate dehydrogenase (quinone).